The following is a 415-amino-acid chain: 4-hydroxy-3-methylbut-2-en-1-yl diphosphate synthase (flavodoxin) (415 aa).

[4Fe-4S] cluster is bound by residues cysteine 298, cysteine 301, cysteine 344, and glutamate 351.

The protein belongs to the IspG family. [4Fe-4S] cluster serves as cofactor.

It carries out the reaction (2E)-4-hydroxy-3-methylbut-2-enyl diphosphate + oxidized [flavodoxin] + H2O + 2 H(+) = 2-C-methyl-D-erythritol 2,4-cyclic diphosphate + reduced [flavodoxin]. It participates in isoprenoid biosynthesis; isopentenyl diphosphate biosynthesis via DXP pathway; isopentenyl diphosphate from 1-deoxy-D-xylulose 5-phosphate: step 5/6. Its function is as follows. Converts 2C-methyl-D-erythritol 2,4-cyclodiphosphate (ME-2,4cPP) into 1-hydroxy-2-methyl-2-(E)-butenyl 4-diphosphate. The protein is 4-hydroxy-3-methylbut-2-en-1-yl diphosphate synthase (flavodoxin) of Solibacter usitatus (strain Ellin6076).